The following is a 615-amino-acid chain: uncharacterized protein (615 aa).

Residue Ser48 is modified to Phosphoserine. The segment covering 424–433 (DRENELEEGS) has biased composition (acidic residues). The disordered stretch occupies residues 424–615 (DRENELEEGS…YARKKTKKNV (192 aa)). 4 stretches are compositionally biased toward basic and acidic residues: residues 439-476 (DNER…KEVG), 484-496 (DGNK…KEVA), 504-521 (ESEK…KEVA), and 529-561 (ESEK…EPSK). 2 stretches are compositionally biased toward basic residues: residues 579–589 (KKPKVVKKVAK) and 606–615 (YARKKTKKNV).

This is an uncharacterized protein from Arabidopsis thaliana (Mouse-ear cress).